We begin with the raw amino-acid sequence, 506 residues long: Maturase K (506 aa).

This sequence belongs to the intron maturase 2 family. MatK subfamily.

It is found in the plastid. The protein resides in the chloroplast. In terms of biological role, usually encoded in the trnK tRNA gene intron. Probably assists in splicing its own and other chloroplast group II introns. This chain is Maturase K, found in Olea europaea (Common olive).